Consider the following 487-residue polypeptide: METVQLRNPPRRQLKKLDEDSLTKQPEEVFDVLEKLGEGSYGSVYKAIHKETGQIVAIKQVPVESDLQEIIKEISIMQQCDSPHVVKYYGSYFKNTDLWIVMEYCGAGSVSDIIRLRNKTLTEDEIATILQSTLKGLEYLHFMRKIHRDIKAGNILLNTEGHAKLADFGVAGQLTDTMAKRNTVIGTPFWMAPEVIQEIGYNCVADIWSLGITAIEMAEGKPPYADIHPMRAIFMIPTNPPPTFRKPELWSDSFMDFVKQCLVKSPEQRATATQLLQHPFVKSAKGVSILRDLINEAMDVKLKRQEAQQREVDQEEEENSEEDELDSGTMVRAAGDEMGTVRVASSMSDGANTMIEHDDTLPSQLGTMVINTEDEEEEGTMKRRDETMQPARPSFLEYFEQKEKENQINSFGKSVPGPLQNSSDWKVPQDGDYEFLKSWTVEDLQKRLLALDPMMEQEIEEIRQKYQSKRQPILDAIEAKKRRQQNF.

An N-acetylmethionine modification is found at Met-1. Thr-3 bears the Phosphothreonine mark. One can recognise a Protein kinase domain in the interval 30 to 281 (FDVLEKLGEG…ATQLLQHPFV (252 aa)). ATP contacts are provided by residues 36–44 (LGEGSYGSV) and Lys-59. Asp-149 functions as the Proton acceptor in the catalytic mechanism. Thr-183 bears the Phosphothreonine; by autocatalysis mark. Residues Ser-265 and Ser-320 each carry the phosphoserine modification. A coiled-coil region spans residues 289–327 (ILRDLINEAMDVKLKRQEAQQREVDQEEEENSEEDELDS). The disordered stretch occupies residues 305–332 (QEAQQREVDQEEEENSEEDELDSGTMVR). Residues 313–326 (DQEEEENSEEDELD) show a composition bias toward acidic residues. A phosphothreonine mark is found at Thr-340 and Thr-367. Residue Thr-387 is modified to Phosphothreonine; by PKB/AKT1. Ser-410 and Ser-414 each carry phosphoserine. Tyr-433 is modified (phosphotyrosine). The 48-residue stretch at 433–480 (YEFLKSWTVEDLQKRLLALDPMMEQEIEEIRQKYQSKRQPILDAIEAK) folds into the SARAH domain.

This sequence belongs to the protein kinase superfamily. STE Ser/Thr protein kinase family. STE20 subfamily. As to quaternary structure, homodimer; mediated via the coiled-coil region. Interacts with NORE1, which inhibits autoactivation. Interacts with and stabilizes SAV1. Interacts with RASSF1. Interacts with FOXO3. Interacts with RASSF2 (via SARAH domain). Interacts with AR, PKB/AKT1, TNNI3 and SIRT1. Interacts with DLG5 (via PDZ domain 3). Interacts with MARK3 and SCRIB in the presence of DLG5. Requires Mg(2+) as cofactor. In terms of processing, autophosphorylated on serine and threonine residues. Phosphorylation at Thr-387 by PKB/AKT1, leads to inhibition of its: kinase activity, nuclear translocation and autophosphorylation at Thr-183. It also diminishes its cleavage by caspases and its ability to phosphorylate FOXO3. Post-translationally, proteolytically cleaved by caspase-3 during apoptosis at Asp-326 and Asp-349 resulting in a 37 kDa or a 39 kDa subunit respectively. The 39 kDa subunit is further cleaved into the 37 kDa form. Proteolytic cleavage results in kinase activation and nuclear translocation of the truncated form (MST1/N). It is less likely that cleavage at Asp-349 is a prerequisite for activation as this site is not conserved in the murine ortholog.

The protein localises to the cytoplasm. Its subcellular location is the nucleus. The enzyme catalyses L-seryl-[protein] + ATP = O-phospho-L-seryl-[protein] + ADP + H(+). The catalysed reaction is L-threonyl-[protein] + ATP = O-phospho-L-threonyl-[protein] + ADP + H(+). With respect to regulation, inhibited by the C-terminal non-catalytic region. Activated by caspase-cleavage. Full activation also requires homodimerization and autophosphorylation of Thr-183. Activated by RASSF1 which acts by preventing its dephosphorylation. Its function is as follows. Stress-activated, pro-apoptotic kinase which, following caspase-cleavage, enters the nucleus and induces chromatin condensation followed by internucleosomal DNA fragmentation. Key component of the Hippo signaling pathway which plays a pivotal role in organ size control and tumor suppression by restricting proliferation and promoting apoptosis. The core of this pathway is composed of a kinase cascade wherein STK3/MST2 and STK4/MST1, in complex with its regulatory protein SAV1, phosphorylates and activates LATS1/2 in complex with its regulatory protein MOB1, which in turn phosphorylates and inactivates YAP1 oncoprotein and WWTR1/TAZ. Phosphorylation of YAP1 by LATS2 inhibits its translocation into the nucleus to regulate cellular genes important for cell proliferation, cell death, and cell migration. STK3/MST2 and STK4/MST1 are required to repress proliferation of mature hepatocytes, to prevent activation of facultative adult liver stem cells (oval cells), and to inhibit tumor formation. Phosphorylates 'Ser-14' of histone H2B (H2BS14ph) during apoptosis. Phosphorylates FOXO3 upon oxidative stress, which results in its nuclear translocation and cell death initiation. Phosphorylates MOBKL1A, MOBKL1B and RASSF2. Phosphorylates TNNI3 (cardiac Tn-I) and alters its binding affinity to TNNC1 (cardiac Tn-C) and TNNT2 (cardiac Tn-T). Phosphorylates FOXO1 on 'Ser-212' and regulates its activation and stimulates transcription of PMAIP1 in a FOXO1-dependent manner. Phosphorylates SIRT1 and inhibits SIRT1-mediated p53/TP53 deacetylation, thereby promoting p53/TP53 dependent transcription and apoptosis upon DNA damage. Acts as an inhibitor of PKB/AKT1. Phosphorylates AR on 'Ser-650' and suppresses its activity by intersecting with PKB/AKT1 signaling and antagonizing formation of AR-chromatin complexes. The chain is Serine/threonine-protein kinase 4 (STK4) from Bos taurus (Bovine).